The chain runs to 325 residues: Forkhead box protein B1 (325 aa).

Positions 12–103 (QKPPYSYISL…GDMFENGSFL (92 aa)) form a DNA-binding region, fork-head. A compositionally biased stretch (low complexity) spans 284-309 (LSNSPPSLSPTSSQTATSQSSPATPS). The segment at 284–325 (LSNSPPSLSPTSSQTATSQSSPATPSETLTSPASALHSVAVH) is disordered.

As to expression, expressed widespread in the early developing ventricular zone of the neural tube and later restricted to areas of the spinal cord, hindbrain, thalamus and hypothalamus. Expressed in epithelial cells of developing and adult mammary glands.

Its subcellular location is the nucleus. Its function is as follows. Transcription factor expressed by neural progenitor cells in specific regions of the embryonic neuroepithelium. Essential for the mammillary nuclei maintenance. Negatively regulates the proliferation of oligodendrocyte progenitors and promotes oligodendrocyte maturation. Also expressed in mammary glands, plays a role in lactation, controls development of mammary glands and the inferior colliculi of the midbrain in the central nervous system that regulates the milk-ejection reflex. The polypeptide is Forkhead box protein B1 (Foxb1) (Mus musculus (Mouse)).